We begin with the raw amino-acid sequence, 339 residues long: Phenylalanine--tRNA ligase alpha subunit (339 aa).

E254 lines the Mg(2+) pocket.

Belongs to the class-II aminoacyl-tRNA synthetase family. Phe-tRNA synthetase alpha subunit type 1 subfamily. As to quaternary structure, tetramer of two alpha and two beta subunits. Mg(2+) serves as cofactor.

Its subcellular location is the cytoplasm. It carries out the reaction tRNA(Phe) + L-phenylalanine + ATP = L-phenylalanyl-tRNA(Phe) + AMP + diphosphate + H(+). This chain is Phenylalanine--tRNA ligase alpha subunit, found in Lachnoclostridium phytofermentans (strain ATCC 700394 / DSM 18823 / ISDg) (Clostridium phytofermentans).